We begin with the raw amino-acid sequence, 219 residues long: ATP-dependent dethiobiotin synthetase BioD (219 aa).

14 to 19 contacts ATP; it reads DVGKTY. Residue Thr-18 coordinates Mg(2+). Residue Lys-37 is part of the active site. Ser-41 serves as a coordination point for substrate. Residues Asp-54, 114–117, and 175–176 contribute to the ATP site; these read EGAG and NN. 2 residues coordinate Mg(2+): Asp-54 and Glu-114.

The protein belongs to the dethiobiotin synthetase family. Homodimer. Requires Mg(2+) as cofactor.

Its subcellular location is the cytoplasm. It catalyses the reaction (7R,8S)-7,8-diammoniononanoate + CO2 + ATP = (4R,5S)-dethiobiotin + ADP + phosphate + 3 H(+). It participates in cofactor biosynthesis; biotin biosynthesis; biotin from 7,8-diaminononanoate: step 1/2. Catalyzes a mechanistically unusual reaction, the ATP-dependent insertion of CO2 between the N7 and N8 nitrogen atoms of 7,8-diaminopelargonic acid (DAPA, also called 7,8-diammoniononanoate) to form a ureido ring. The polypeptide is ATP-dependent dethiobiotin synthetase BioD (Fusobacterium nucleatum subsp. nucleatum (strain ATCC 25586 / DSM 15643 / BCRC 10681 / CIP 101130 / JCM 8532 / KCTC 2640 / LMG 13131 / VPI 4355)).